Here is a 349-residue protein sequence, read N- to C-terminus: uncharacterized protein (349 aa).

The THUMP domain maps to 51-160; the sequence is NIIKENKNNL…QDESYISIFQ (110 aa).

This is an uncharacterized protein from Methanocaldococcus jannaschii (strain ATCC 43067 / DSM 2661 / JAL-1 / JCM 10045 / NBRC 100440) (Methanococcus jannaschii).